A 370-amino-acid polypeptide reads, in one-letter code: F-box protein At1g66490 (370 aa).

Residues 1 to 46 (MRTISDLPVALVEEILSRVPLTSLSAVRSTCKTWNALSKTQIFGKT) form the F-box domain.

This is F-box protein At1g66490 from Arabidopsis thaliana (Mouse-ear cress).